The chain runs to 198 residues: Protein GrpE (198 aa).

The disordered stretch occupies residues 1-58 (MTEKDQSVNNEEFAEKEDNTAKDSNTDEQIEKTASEDDVQNDSSAVDDKEKEIQQLKE). 2 stretches are compositionally biased toward basic and acidic residues: residues 16 to 35 (KEDN…KTAS) and 46 to 58 (VDDK…QLKE).

This sequence belongs to the GrpE family. Homodimer.

The protein resides in the cytoplasm. Participates actively in the response to hyperosmotic and heat shock by preventing the aggregation of stress-denatured proteins, in association with DnaK and GrpE. It is the nucleotide exchange factor for DnaK and may function as a thermosensor. Unfolded proteins bind initially to DnaJ; upon interaction with the DnaJ-bound protein, DnaK hydrolyzes its bound ATP, resulting in the formation of a stable complex. GrpE releases ADP from DnaK; ATP binding to DnaK triggers the release of the substrate protein, thus completing the reaction cycle. Several rounds of ATP-dependent interactions between DnaJ, DnaK and GrpE are required for fully efficient folding. This chain is Protein GrpE, found in Staphylococcus carnosus (strain TM300).